Consider the following 177-residue polypeptide: Protein YOP1 (177 aa).

The Cytoplasmic portion of the chain corresponds to 1–35 (MADVISSLQTQLKELDTKFAGNNVLNQLEQRTNLP). The chain crosses the membrane as a helical span at residues 36 to 55 (KSYLVVGSTIFYLLLIFINV). Topologically, residues 56 to 57 (GG) are lumenal. Residues 58 to 78 (IGEILGNFAGFVIPAYYSILA) traverse the membrane as a helical segment. Over 79-88 (LKTTTTKDDT) the chain is Cytoplasmic. The helical transmembrane segment at 89 to 103 (QLLTYWIVFSFLNVI) threads the bilayer. The Lumenal portion of the chain corresponds to 104-108 (EFWSK). The chain crosses the membrane as a helical span at residues 109–127 (ALLYIIPFYWFLKTIFLLY). Residues 128–177 (IALPQTGGATMIYNRFISPLTDKYILGPKKTDGVQQSVKEASRATGAATH) lie on the Cytoplasmic side of the membrane.

This sequence belongs to the DP1 family. As to quaternary structure, oligomer.

The protein resides in the endoplasmic reticulum membrane. Its subcellular location is the golgi apparatus membrane. In terms of biological role, required to generate and maintain the structure of the tubular endoplasmic reticulum network and the vacuole. Induces high curvature in membranes and causes membrane tubule formation. Involved in membrane/vesicle trafficking. The polypeptide is Protein YOP1 (YOP1) (Candida glabrata (strain ATCC 2001 / BCRC 20586 / JCM 3761 / NBRC 0622 / NRRL Y-65 / CBS 138) (Yeast)).